The primary structure comprises 203 residues: uncharacterized protein (203 aa).

The tract at residues 1–23 (MGSSFVIDRSSSSPAPPRGPAPK) is disordered.

This is an uncharacterized protein from Saccharomyces cerevisiae (strain ATCC 204508 / S288c) (Baker's yeast).